The primary structure comprises 343 residues: T-cell immunoglobulin and mucin domain-containing protein 4 (343 aa).

An N-terminal signal peptide occupies residues 1–22 (MSKGLLLLWLVTELWWLYLTPA). One can recognise an Ig-like V-type domain in the interval 23–128 (ASEDTIIGFL…WFNDVKKNVR (106 aa)). Residues 23 to 279 (ASEDTIIGFL…KSHQINSRQT (257 aa)) are Extracellular-facing. 3 disulfides stabilise this stretch: cysteine 40/cysteine 112, cysteine 53/cysteine 64, and cysteine 59/cysteine 111. A glycan (N-linked (GlcNAc...) asparagine) is linked at asparagine 220. Positions 239 to 258 (TGSNPGILPSTSQLTTQKTT) are disordered. Residues 248–258 (STSQLTTQKTT) show a composition bias toward low complexity. The helical transmembrane segment at 280-300 (ILIIACCVGFVLMVLLFLAFL) threads the bilayer. Over 301 to 343 (LRGKVTGANCLQRHKRPDNTEDSDSVLNDMSHGRDDEDGIFTL) the chain is Cytoplasmic. The tract at residues 313-343 (RHKRPDNTEDSDSVLNDMSHGRDDEDGIFTL) is disordered. A phosphoserine mark is found at serine 323, serine 325, and serine 331.

The protein belongs to the immunoglobulin superfamily. TIM family. Homodimer. Predominantly expressed in lymphoid tissues, such as spleen, lymph nodes, and Peyer patches. Also expressed in fetal liver, salivary gland, and spleen stromal cells, predominantly in the marginal zone and to a lesser extent throughout the white pulp. Not expressed in bone marrow-derived cells. Expressed mainly by antigen presenting cells (APCs) in T- and B-cell areas, but not by T- or B-lymphocytes.

The protein resides in the membrane. Phosphatidylserine receptor that plays different role in immune response including phagocytosis of apoptotic cells and T-cell regulation. Controls T-cell activation in a bimodal fashion, decreasing the activation of naive T-cells by inducing cell cycle arrest, while increasing proliferation of activated T-cells by activating AKT1 and ERK1/2 phosphorylations and subsequent signaling pathways. Also plays a role in efferocytosis which is the process by which apoptotic cells are removed by phagocytic cells. Mechanistically, promotes the engulfment of apoptotic cells or exogenous particles by securing them to phagocytes through direct binding to phosphatidylserine present on apoptotic cells, while other engulfment receptors such as MERTK efficiently recognize apoptotic cells and mediate their ingestion. Additionally, promotes autophagy process by suppressing NLRP3 inflammasome activity via activation of STK11/PRKAA1 pathway in a phosphatidylserine-dependent mechanism. This Mus musculus (Mouse) protein is T-cell immunoglobulin and mucin domain-containing protein 4 (Timd4).